We begin with the raw amino-acid sequence, 382 residues long: Glutamyl-tRNA reductase (382 aa).

Substrate-binding positions include 38 to 41, serine 85, 90 to 92, and glutamine 96; these read TCNR and ENQ. Cysteine 39 functions as the Nucleophile in the catalytic mechanism. 164–169 is an NADP(+) binding site; the sequence is GAGEMG.

The protein belongs to the glutamyl-tRNA reductase family. In terms of assembly, homodimer.

It carries out the reaction (S)-4-amino-5-oxopentanoate + tRNA(Glu) + NADP(+) = L-glutamyl-tRNA(Glu) + NADPH + H(+). Its pathway is porphyrin-containing compound metabolism; protoporphyrin-IX biosynthesis; 5-aminolevulinate from L-glutamyl-tRNA(Glu): step 1/2. In terms of biological role, catalyzes the NADPH-dependent reduction of glutamyl-tRNA(Glu) to glutamate 1-semialdehyde (GSA). The sequence is that of Glutamyl-tRNA reductase from Methanococcus maripaludis (strain C5 / ATCC BAA-1333).